We begin with the raw amino-acid sequence, 430 residues long: Tol-Pal system protein TolB (430 aa).

Positions 1–21 (MKQAFRLMVGLLVLWASVLHA) are cleaved as a signal peptide.

The protein belongs to the TolB family. In terms of assembly, the Tol-Pal system is composed of five core proteins: the inner membrane proteins TolA, TolQ and TolR, the periplasmic protein TolB and the outer membrane protein Pal. They form a network linking the inner and outer membranes and the peptidoglycan layer.

It is found in the periplasm. In terms of biological role, part of the Tol-Pal system, which plays a role in outer membrane invagination during cell division and is important for maintaining outer membrane integrity. TolB occupies a key intermediary position in the Tol-Pal system because it communicates directly with both membrane-embedded components, Pal in the outer membrane and TolA in the inner membrane. The chain is Tol-Pal system protein TolB from Edwardsiella ictaluri (strain 93-146).